The primary structure comprises 374 residues: Tetraacyldisaccharide 4'-kinase (374 aa).

Residue 59–66 (TAGGTGKT) participates in ATP binding.

This sequence belongs to the LpxK family.

It catalyses the reaction a lipid A disaccharide + ATP = a lipid IVA + ADP + H(+). It participates in glycolipid biosynthesis; lipid IV(A) biosynthesis; lipid IV(A) from (3R)-3-hydroxytetradecanoyl-[acyl-carrier-protein] and UDP-N-acetyl-alpha-D-glucosamine: step 6/6. In terms of biological role, transfers the gamma-phosphate of ATP to the 4'-position of a tetraacyldisaccharide 1-phosphate intermediate (termed DS-1-P) to form tetraacyldisaccharide 1,4'-bis-phosphate (lipid IVA). This chain is Tetraacyldisaccharide 4'-kinase, found in Elusimicrobium minutum (strain Pei191).